The chain runs to 643 residues: Probable potassium transport system protein Kup (643 aa).

Residues 1–12 show a composition bias toward basic and acidic residues; the sequence is MSISSKTEDSDI. A disordered region spans residues 1–20; that stretch reads MSISSKTEDSDIRSSVMTDH. 12 helical membrane-spanning segments follow: residues 28 to 48, 65 to 85, 121 to 141, 158 to 178, 187 to 207, 224 to 244, 268 to 288, 301 to 321, 358 to 378, 384 to 404, 415 to 435, and 440 to 460; these read LAGL…TSPL, AGNV…IVGL, WLLV…GMIT, PAFH…LFLF, GALF…LGII, GISF…AVFL, WFLL…ALLL, LVPS…TIIA, IYVP…VAWF, LAAA…ILFY, PAAL…FFGA, and LFHG…IMNT.

The protein belongs to the HAK/KUP transporter (TC 2.A.72) family.

The protein localises to the cell inner membrane. It catalyses the reaction K(+)(in) + H(+)(in) = K(+)(out) + H(+)(out). Its function is as follows. Transport of potassium into the cell. Likely operates as a K(+):H(+) symporter. The chain is Probable potassium transport system protein Kup from Chlorobium luteolum (strain DSM 273 / BCRC 81028 / 2530) (Pelodictyon luteolum).